The primary structure comprises 259 residues: GTP cyclohydrolase FolE2 (259 aa).

This sequence belongs to the GTP cyclohydrolase IV family.

The enzyme catalyses GTP + H2O = 7,8-dihydroneopterin 3'-triphosphate + formate + H(+). It participates in cofactor biosynthesis; 7,8-dihydroneopterin triphosphate biosynthesis; 7,8-dihydroneopterin triphosphate from GTP: step 1/1. Its function is as follows. Converts GTP to 7,8-dihydroneopterin triphosphate. The sequence is that of GTP cyclohydrolase FolE2 from Thermosipho melanesiensis (strain DSM 12029 / CIP 104789 / BI429).